A 327-amino-acid polypeptide reads, in one-letter code: MSTRPVEGSAIWDVLSPHSPHAAAADGKTLVWVEAGELCGHDTAESANLARIRPGLLAAFCHPKATEDDLTLITKWMAWLFLLDDRIDESDLGRDADLLDGHLQDLQGVALGIRTASGPMSRALEEIITQASAGMGDAWQLRFRRNISDYLLACVWQAAHRQAGEFPDPEVFPHWRRAFGAIMPSFDLIERTDGGALPSCVYYSRPYQSLLTAAADLVCWTNDLMTVDKEAAHGDLHNLVLVTEHDRHQDRRTASAAVSAACEQRMRAHTSARRDLTGLTAALGLPDTVRTHADDCAASLLVWVRGHLEWGLETPRYRPGTTGTGTD.

Mg(2+)-binding residues include D84, D85, N222, T226, and E230.

This sequence belongs to the terpene synthase family.

It catalyses the reaction (2E,6E)-farnesyl diphosphate = (-)-delta-cadinene + diphosphate. Functionally, catalyzes the conversion of (2E,6E)-farnesyl diphosphate into (-)-delta-cadinene. Cyclization mechanism involves an intermediate nerolidyl diphosphate leading to a helminthogermacradienyl cation. In Streptomyces clavuligerus, this protein is (-)-delta-cadinene synthase.